The primary structure comprises 188 residues: Ribosome-recycling factor (188 aa).

Belongs to the RRF family.

The protein resides in the cytoplasm. Responsible for the release of ribosomes from messenger RNA at the termination of protein biosynthesis. May increase the efficiency of translation by recycling ribosomes from one round of translation to another. This is Ribosome-recycling factor from Dinoroseobacter shibae (strain DSM 16493 / NCIMB 14021 / DFL 12).